A 209-amino-acid chain; its full sequence is Max dimerization protein 4 (209 aa).

Residues 6–23 (LLILLEAAEYLERRDREA) are interaction with SIN3A and SIN3B. The bHLH domain maps to 53 to 105 (NNRSSHNELEKHRRAKLRLYLEQLKQLVPLGPDSTRHTTLSLLKRAKVHIKKL). Residues 140–209 (RVRTDSTGSA…CRRLGRPALS (70 aa)) form a disordered region. Over residues 153 to 163 (DDSEQEVDIEG) the composition is skewed to acidic residues. The segment covering 199-209 (HCRRLGRPALS) has biased composition (basic residues).

Efficient DNA binding requires dimerization with another bHLH protein. Binds DNA as a heterodimer with MAX. Interacts with SIN3A AND SIN3B. Interacts with RNF17.

The protein localises to the nucleus. Functionally, transcriptional repressor. Binds with MAX to form a sequence-specific DNA-binding protein complex which recognizes the core sequence 5'-CAC[GA]TG-3'. Antagonizes MYC transcriptional activity by competing for MAX and suppresses MYC dependent cell transformation. The protein is Max dimerization protein 4 (MXD4) of Homo sapiens (Human).